Consider the following 173-residue polypeptide: Ribosome maturation factor RimM (173 aa).

Positions 95-169 (EGSYYFKDIL…RIEVTLLEGL (75 aa)) constitute a PRC barrel domain.

The protein belongs to the RimM family. Binds ribosomal protein uS19.

The protein resides in the cytoplasm. Functionally, an accessory protein needed during the final step in the assembly of 30S ribosomal subunit, possibly for assembly of the head region. Essential for efficient processing of 16S rRNA. May be needed both before and after RbfA during the maturation of 16S rRNA. It has affinity for free ribosomal 30S subunits but not for 70S ribosomes. This is Ribosome maturation factor RimM from Lactobacillus johnsonii (strain CNCM I-12250 / La1 / NCC 533).